The sequence spans 159 residues: Endoribonuclease YbeY (159 aa).

Residues His114, His118, and His124 each contribute to the Zn(2+) site.

The protein belongs to the endoribonuclease YbeY family. The cofactor is Zn(2+).

The protein localises to the cytoplasm. Its function is as follows. Single strand-specific metallo-endoribonuclease involved in late-stage 70S ribosome quality control and in maturation of the 3' terminus of the 16S rRNA. This chain is Endoribonuclease YbeY, found in Pectobacterium atrosepticum (strain SCRI 1043 / ATCC BAA-672) (Erwinia carotovora subsp. atroseptica).